The primary structure comprises 912 residues: Eukaryotic translation initiation factor 3 subunit C (912 aa).

Residues 1-44 are disordered; that stretch reads MSRFFTTGSDSESESSLSGEELVTKPVGGNYGKQPLLLSEDEED. Positions 8-21 are enriched in low complexity; sequence GSDSESESSLSGEE. 7 positions are modified to phosphoserine: serine 9, serine 11, serine 13, serine 15, serine 16, serine 18, and serine 39. Lysine 99 is modified (N6-acetyllysine). Disordered stretches follow at residues 157–305 and 521–541; these read TNYK…RVRG and QLTP…NEGE. A phosphoserine mark is found at serine 166, serine 178, serine 181, and serine 182. Acidic residues predominate over residues 166-190; that stretch reads SADEDAEKNEEDSEGSSDEDEDDDG. Basic and acidic residues predominate over residues 199-215; that stretch reads KKSEAPSGDSRKFLKKE. Residues 216–229 show a composition bias toward acidic residues; that stretch reads DEDEDSEESEDSEA. The segment covering 260–277 has biased composition (basic and acidic residues); the sequence is PTTEEDKKAAEKKREDKA. Positions 521 to 530 are enriched in polar residues; the sequence is QLTPPEGSSK. Position 523 is a phosphothreonine (threonine 523). The residue at position 642 (lysine 642) is an N6-acetyllysine. The 177-residue stretch at 672 to 848 folds into the PCI domain; it reads FHLHINLELL…QTVVMHRTEP (177 aa). Positions 884–912 are disordered; that stretch reads FRDQKDGYRKNEGYMRRGGYRQQQSQTAY. The segment covering 885–898 has biased composition (basic and acidic residues); sequence RDQKDGYRKNEGYM. Serine 908 carries the post-translational modification Phosphoserine.

Belongs to the eIF-3 subunit C family. Component of the eukaryotic translation initiation factor 3 (eIF-3) complex, which is composed of 13 subunits: EIF3A, EIF3B, EIF3C, EIF3D, EIF3E, EIF3F, EIF3G, EIF3H, EIF3I, EIF3J, EIF3K, EIF3L and EIF3M. The eIF-3 complex appears to include 3 stable modules: module A is composed of EIF3A, EIF3B, EIF3G and EIF3I; module B is composed of EIF3F, EIF3H, and EIF3M; and module C is composed of EIF3C, EIF3D, EIF3E, EIF3K and EIF3L. EIF3C of module C binds EIF3B of module A and EIF3H of module B, thereby linking the three modules. EIF3J is a labile subunit that binds to the eIF-3 complex via EIF3B. The eIF-3 complex interacts with RPS6KB1 under conditions of nutrient depletion. Mitogenic stimulation leads to binding and activation of a complex composed of MTOR and RPTOR, leading to phosphorylation and release of RPS6KB1 and binding of EIF4B to eIF-3. Identified in a HCV IRES-mediated translation complex, at least composed of EIF3C, IGF2BP1, RPS3 and HCV RNA-replicon. Interacts with ALKBH4, IFIT1 and IFIT2. Interacts with BZW2/5MP1. In terms of processing, phosphorylated. Phosphorylation is enhanced upon serum stimulation.

The protein resides in the cytoplasm. Functionally, component of the eukaryotic translation initiation factor 3 (eIF-3) complex, which is required for several steps in the initiation of protein synthesis. The eIF-3 complex associates with the 40S ribosome and facilitates the recruitment of eIF-1, eIF-1A, eIF-2:GTP:methionyl-tRNAi and eIF-5 to form the 43S pre-initiation complex (43S PIC). The eIF-3 complex stimulates mRNA recruitment to the 43S PIC and scanning of the mRNA for AUG recognition. The eIF-3 complex is also required for disassembly and recycling of post-termination ribosomal complexes and subsequently prevents premature joining of the 40S and 60S ribosomal subunits prior to initiation. The eIF-3 complex specifically targets and initiates translation of a subset of mRNAs involved in cell proliferation, including cell cycling, differentiation and apoptosis, and uses different modes of RNA stem-loop binding to exert either translational activation or repression. The protein is Eukaryotic translation initiation factor 3 subunit C of Bos taurus (Bovine).